Here is a 414-residue protein sequence, read N- to C-terminus: tRNA(Ile)-lysidine synthase (414 aa).

13-18 is a binding site for ATP; that stretch reads SGGIDS.

Belongs to the tRNA(Ile)-lysidine synthase family.

Its subcellular location is the cytoplasm. The enzyme catalyses cytidine(34) in tRNA(Ile2) + L-lysine + ATP = lysidine(34) in tRNA(Ile2) + AMP + diphosphate + H(+). Ligates lysine onto the cytidine present at position 34 of the AUA codon-specific tRNA(Ile) that contains the anticodon CAU, in an ATP-dependent manner. Cytidine is converted to lysidine, thus changing the amino acid specificity of the tRNA from methionine to isoleucine. The polypeptide is tRNA(Ile)-lysidine synthase (Thermotoga maritima (strain ATCC 43589 / DSM 3109 / JCM 10099 / NBRC 100826 / MSB8)).